Here is a 483-residue protein sequence, read N- to C-terminus: Inositol-pentakisphosphate 2-kinase (483 aa).

Residues 140-144 carry the EXKPK motif motif; that stretch reads EIKPK. The segment at 279–298 is disordered; that stretch reads SNRSGEPRKMHLSESKPHCE. Residues 281–297 are compositionally biased toward basic and acidic residues; that stretch reads RSGEPRKMHLSESKPHC.

The protein belongs to the IPK1 type 2 family. Expressed both maternally and zygotically. Expressed in cleavage-stage embryos. Ubiquitously distributed throughout blastula stages of embryogenesis. At the onset of gastrulation, it is enriched in cells around the blastoderm margin. At shield stage, expression is detected in the deep involuted cells that contribute to mesendoderm. During mid and late gastrula stages, it is strongly expressed in axial mesendoderm. However, it is not present in the nascent tailbud at yolk plug closure (YPC) stage. Expression in axial mesendoderm is reduced at the 2 somite stage (SS). At 6 SS, it is expressed in cells surrounding Kupffer's vesicle, but apparently not within. By 10 SS, it is no longer detected as a specific signal above background.

Its subcellular location is the cytoplasm. The protein resides in the nucleus. The catalysed reaction is 1D-myo-inositol 1,3,4,5,6-pentakisphosphate + ATP = 1D-myo-inositol hexakisphosphate + ADP + H(+). In terms of biological role, phosphorylates Ins(1,3,4,5,6)P5 at position 2 to form Ins(1,2,3,4,5,6)P6 (InsP6 or phytate). InsP6 is involved in many processes such as mRNA export, non-homologous end-joining, endocytosis and ion channel regulation. InsP6 also acts as a key regulator of left-right asymmetry in embryo, probably by regulating asymmetric Ca(2+) during left-right specification. This Danio rerio (Zebrafish) protein is Inositol-pentakisphosphate 2-kinase (ippk).